Here is a 492-residue protein sequence, read N- to C-terminus: Bifunctional purine biosynthesis protein PurH (492 aa).

Residues 1-144 enclose the MGS-like domain; the sequence is MKKAILSVSN…KNYKHVTTIV (144 aa).

The protein belongs to the PurH family.

It catalyses the reaction (6R)-10-formyltetrahydrofolate + 5-amino-1-(5-phospho-beta-D-ribosyl)imidazole-4-carboxamide = 5-formamido-1-(5-phospho-D-ribosyl)imidazole-4-carboxamide + (6S)-5,6,7,8-tetrahydrofolate. The catalysed reaction is IMP + H2O = 5-formamido-1-(5-phospho-D-ribosyl)imidazole-4-carboxamide. It functions in the pathway purine metabolism; IMP biosynthesis via de novo pathway; 5-formamido-1-(5-phospho-D-ribosyl)imidazole-4-carboxamide from 5-amino-1-(5-phospho-D-ribosyl)imidazole-4-carboxamide (10-formyl THF route): step 1/1. Its pathway is purine metabolism; IMP biosynthesis via de novo pathway; IMP from 5-formamido-1-(5-phospho-D-ribosyl)imidazole-4-carboxamide: step 1/1. The chain is Bifunctional purine biosynthesis protein PurH from Staphylococcus aureus (strain JH1).